A 308-amino-acid polypeptide reads, in one-letter code: Ribosomal RNA small subunit methyltransferase H (308 aa).

S-adenosyl-L-methionine contacts are provided by residues 33–35, Asp-51, Phe-82, Asp-96, and Gln-103; that span reads GGY.

This sequence belongs to the methyltransferase superfamily. RsmH family.

The protein resides in the cytoplasm. It carries out the reaction cytidine(1402) in 16S rRNA + S-adenosyl-L-methionine = N(4)-methylcytidine(1402) in 16S rRNA + S-adenosyl-L-homocysteine + H(+). In terms of biological role, specifically methylates the N4 position of cytidine in position 1402 (C1402) of 16S rRNA. The polypeptide is Ribosomal RNA small subunit methyltransferase H (Rickettsia canadensis (strain McKiel)).